The following is a 289-amino-acid chain: ATP synthase gamma chain (289 aa).

This sequence belongs to the ATPase gamma chain family. As to quaternary structure, F-type ATPases have 2 components, CF(1) - the catalytic core - and CF(0) - the membrane proton channel. CF(1) has five subunits: alpha(3), beta(3), gamma(1), delta(1), epsilon(1). CF(0) has three main subunits: a, b and c.

It localises to the cell membrane. In terms of biological role, produces ATP from ADP in the presence of a proton gradient across the membrane. The gamma chain is believed to be important in regulating ATPase activity and the flow of protons through the CF(0) complex. This Lactococcus lactis subsp. cremoris (strain SK11) protein is ATP synthase gamma chain.